Reading from the N-terminus, the 151-residue chain is Large ribosomal subunit protein bL9 (151 aa).

It belongs to the bacterial ribosomal protein bL9 family.

Functionally, binds to the 23S rRNA. The chain is Large ribosomal subunit protein bL9 from Prochlorococcus marinus (strain MIT 9312).